Consider the following 734-residue polypeptide: Photosystem I P700 chlorophyll a apoprotein A2 (734 aa).

Transmembrane regions (helical) follow at residues 46 to 69 (IFASHFGQLAIIFLWTSGNLFHVA), 135 to 158 (LYTGALFLLFLSALSLIGGWLHLQ), 175 to 199 (LNHHLSGLFGVSSLAWTGHLVHVAI), 273 to 291 (MAHHHLAIAILFLIAGHMY), 330 to 353 (IHFQLGLALASLGVITSLVAQHMY), 369 to 395 (AALYTHHQYIAGFIMTGAFAHGAIFFI), 417 to 439 (AIISHLSWASLFLGFHTLGLYVH), and 517 to 535 (FLVHHAIALGLHTTTLILV). [4Fe-4S] cluster-binding residues include Cys-559 and Cys-568. Transmembrane regions (helical) follow at residues 575-596 (AFYLAVFWMLNTIGWVTFYWHW) and 643-665 (LSVWAWMFLFGHLVWATGFMFLI). Residues His-654, Met-662, and Tyr-670 each coordinate chlorophyll a. Trp-671 contributes to the phylloquinone binding site. A helical transmembrane segment spans residues 707-727 (LVGLAHFSVGYIFTYAAFLIA).

The protein belongs to the PsaA/PsaB family. As to quaternary structure, the PsaA/B heterodimer binds the P700 chlorophyll special pair and subsequent electron acceptors. PSI consists of a core antenna complex that captures photons, and an electron transfer chain that converts photonic excitation into a charge separation. The eukaryotic PSI reaction center is composed of at least 11 subunits. Requires P700 is a chlorophyll a/chlorophyll a' dimer, A0 is one or more chlorophyll a, A1 is one or both phylloquinones and FX is a shared 4Fe-4S iron-sulfur center. as cofactor.

The protein localises to the plastid. The protein resides in the chloroplast thylakoid membrane. The enzyme catalyses reduced [plastocyanin] + hnu + oxidized [2Fe-2S]-[ferredoxin] = oxidized [plastocyanin] + reduced [2Fe-2S]-[ferredoxin]. PsaA and PsaB bind P700, the primary electron donor of photosystem I (PSI), as well as the electron acceptors A0, A1 and FX. PSI is a plastocyanin-ferredoxin oxidoreductase, converting photonic excitation into a charge separation, which transfers an electron from the donor P700 chlorophyll pair to the spectroscopically characterized acceptors A0, A1, FX, FA and FB in turn. Oxidized P700 is reduced on the lumenal side of the thylakoid membrane by plastocyanin. This chain is Photosystem I P700 chlorophyll a apoprotein A2, found in Capsella bursa-pastoris (Shepherd's purse).